Consider the following 464-residue polypeptide: ATP-dependent protease ATPase subunit HslU (464 aa).

Residues I22, 64–69, D275, E340, and R412 each bind ATP; that span reads GVGKTE.

It belongs to the ClpX chaperone family. HslU subfamily. As to quaternary structure, a double ring-shaped homohexamer of HslV is capped on each side by a ring-shaped HslU homohexamer. The assembly of the HslU/HslV complex is dependent on binding of ATP.

The protein resides in the cytoplasm. Functionally, ATPase subunit of a proteasome-like degradation complex; this subunit has chaperone activity. The binding of ATP and its subsequent hydrolysis by HslU are essential for unfolding of protein substrates subsequently hydrolyzed by HslV. HslU recognizes the N-terminal part of its protein substrates and unfolds these before they are guided to HslV for hydrolysis. This chain is ATP-dependent protease ATPase subunit HslU, found in Cytophaga hutchinsonii (strain ATCC 33406 / DSM 1761 / CIP 103989 / NBRC 15051 / NCIMB 9469 / D465).